Reading from the N-terminus, the 625-residue chain is tRNA-guanine(15) transglycosylase (625 aa).

Catalysis depends on D86, which acts as the Nucleophile. The substrate site is built by D121 and G184. The PUA domain occupies G546–N621.

It belongs to the archaeosine tRNA-ribosyltransferase family. Zn(2+) serves as cofactor.

The enzyme catalyses guanosine(15) in tRNA + 7-cyano-7-deazaguanine = 7-cyano-7-carbaguanosine(15) in tRNA + guanine. It participates in tRNA modification; archaeosine-tRNA biosynthesis. In terms of biological role, exchanges the guanine residue with 7-cyano-7-deazaguanine (preQ0) at position 15 in the dihydrouridine loop (D-loop) of archaeal tRNAs. The protein is tRNA-guanine(15) transglycosylase of Picrophilus torridus (strain ATCC 700027 / DSM 9790 / JCM 10055 / NBRC 100828 / KAW 2/3).